The primary structure comprises 309 residues: Malate dehydrogenase (309 aa).

Residues Gly9–Gly14 and Asp33 contribute to the NAD(+) site. Substrate is bound by residues Arg82 and Arg88. NAD(+)-binding positions include Asn95 and Val118 to Asn120. Substrate contacts are provided by Asn120 and Arg151. The active-site Proton acceptor is the His175.

It belongs to the LDH/MDH superfamily. MDH type 3 family.

It carries out the reaction (S)-malate + NAD(+) = oxaloacetate + NADH + H(+). Its function is as follows. Catalyzes the reversible oxidation of malate to oxaloacetate. The chain is Malate dehydrogenase from Chloroflexus aggregans (strain MD-66 / DSM 9485).